We begin with the raw amino-acid sequence, 475 residues long: Putative UDP-glucose glucosyltransferase (475 aa).

It belongs to the UDP-glycosyltransferase family.

The polypeptide is Putative UDP-glucose glucosyltransferase (Fragaria ananassa (Strawberry)).